Here is a 353-residue protein sequence, read N- to C-terminus: ATP-dependent (S)-NAD(P)H-hydrate dehydratase (353 aa).

Positions 18–345 constitute a YjeF C-terminal domain; sequence MLARVRQMVP…DEVHTAFLNL (328 aa). The interval 95 to 121 is disordered; the sequence is RSSPPALSSSDSGSSPSRTKSAPDTDP. Residues 96–114 are compositionally biased toward low complexity; the sequence is SSPPALSSSDSGSSPSRTK. (6S)-NADPHX contacts are provided by residues glycine 143 and 196–202; that span reads NVVEFGR. ATP is bound by residues 241–245 and 260–269; these read KGAKD and GGLKRSGGQG. Position 270 (aspartate 270) interacts with (6S)-NADPHX.

This sequence belongs to the NnrD/CARKD family. It depends on Mg(2+) as a cofactor.

It localises to the cytoplasm. It carries out the reaction (6S)-NADHX + ATP = ADP + phosphate + NADH + H(+). It catalyses the reaction (6S)-NADPHX + ATP = ADP + phosphate + NADPH + H(+). In terms of biological role, catalyzes the dehydration of the S-form of NAD(P)HX at the expense of ATP, which is converted to ADP. Together with NAD(P)HX epimerase, which catalyzes the epimerization of the S- and R-forms, the enzyme allows the repair of both epimers of NAD(P)HX, a damaged form of NAD(P)H that is a result of enzymatic or heat-dependent hydration. This chain is ATP-dependent (S)-NAD(P)H-hydrate dehydratase, found in Neurospora crassa (strain ATCC 24698 / 74-OR23-1A / CBS 708.71 / DSM 1257 / FGSC 987).